The sequence spans 213 residues: Large ribosomal subunit protein uL3 (213 aa).

The protein belongs to the universal ribosomal protein uL3 family. Part of the 50S ribosomal subunit. Forms a cluster with proteins L14 and L19.

In terms of biological role, one of the primary rRNA binding proteins, it binds directly near the 3'-end of the 23S rRNA, where it nucleates assembly of the 50S subunit. The sequence is that of Large ribosomal subunit protein uL3 from Desulforudis audaxviator (strain MP104C).